Consider the following 217-residue polypeptide: Meiotic expression up-regulated protein 29 (217 aa).

The N-terminal stretch at 1-21 (MFVVKTAVLLFFALFIGNTYA) is a signal peptide. Residues 22–133 (YTYSLDRIQA…SGVLLHRPWK (112 aa)) are Extracellular-facing. A glycan (N-linked (GlcNAc...) asparagine) is linked at Asn-84. Residues 134 to 154 (LFSLKPFTAAFVLLLAASYLA) traverse the membrane as a helical segment. Residues 155-217 (TACFRMLGYL…VPVPVLDESV (63 aa)) are Cytoplasmic-facing.

It localises to the membrane. This Schizosaccharomyces pombe (strain 972 / ATCC 24843) (Fission yeast) protein is Meiotic expression up-regulated protein 29 (meu29).